Here is a 115-residue protein sequence, read N- to C-terminus: NADH-ubiquinone oxidoreductase chain 3 (115 aa).

Transmembrane regions (helical) follow at residues 5 to 25 (TALLVNITLSMLLIIVAFWFF), 55 to 75 (FFLVAITFLLFDLEIALLLPL), and 86 to 106 (IMMLTAFILISVLALGLAYEW).

It belongs to the complex I subunit 3 family. Core subunit of respiratory chain NADH dehydrogenase (Complex I) which is composed of 45 different subunits. Interacts with TMEM186. Interacts with TMEM242.

The protein localises to the mitochondrion inner membrane. It carries out the reaction a ubiquinone + NADH + 5 H(+)(in) = a ubiquinol + NAD(+) + 4 H(+)(out). Core subunit of the mitochondrial membrane respiratory chain NADH dehydrogenase (Complex I) which catalyzes electron transfer from NADH through the respiratory chain, using ubiquinone as an electron acceptor. Essential for the catalytic activity of complex I. The polypeptide is NADH-ubiquinone oxidoreductase chain 3 (Peromyscus sejugis (Santa Cruz mouse)).